Reading from the N-terminus, the 419-residue chain is Methylthioribose kinase (419 aa).

ATP-binding residues include asparagine 49 and lysine 64. Aspartate 239 contributes to the substrate binding site. 256 to 258 (DPE) provides a ligand contact to ATP. Arginine 365 serves as a coordination point for substrate.

It belongs to the methylthioribose kinase family. As to quaternary structure, homodimer.

It carries out the reaction 5-(methylsulfanyl)-D-ribose + ATP = 5-(methylsulfanyl)-alpha-D-ribose 1-phosphate + ADP + H(+). The catalysed reaction is 5-deoxy-D-ribose + ATP = 5-deoxy-alpha-D-ribose 1-phosphate + ADP + H(+). The protein operates within amino-acid biosynthesis; L-methionine biosynthesis via salvage pathway; S-methyl-5-thio-alpha-D-ribose 1-phosphate from S-methyl-5'-thioadenosine (hydrolase route): step 2/2. Catalyzes the phosphorylation of methylthioribose into methylthioribose-1-phosphate. Also catalyzes the phosphorylation of 5-deoxyribose to 5-deoxyribose-1-phosphate. Part of a bifunctional DHAP-shunt salvage pathway for SAM by-products. The protein is Methylthioribose kinase of Escherichia coli O45:K1 (strain S88 / ExPEC).